We begin with the raw amino-acid sequence, 508 residues long: Photosystem II CP47 reaction center protein (508 aa).

The next 6 membrane-spanning stretches (helical) occupy residues 21-36 (AVHLMHTALVSGWAGS), 101-115 (ILLSGALFMAAIWHW), 140-156 (GIHLFLSGLLCFGFGAF), 203-218 (IAAGILGILAGLFHLS), 237-252 (VLSSSIAAVFWAAFVV), and 457-472 (WFALLFFFGHIWHGAR).

This sequence belongs to the PsbB/PsbC family. PsbB subfamily. In terms of assembly, PSII is composed of 1 copy each of membrane proteins PsbA, PsbB, PsbC, PsbD, PsbE, PsbF, PsbH, PsbI, PsbJ, PsbK, PsbL, PsbM, PsbT, PsbX, PsbY, PsbZ, Psb30/Ycf12, at least 3 peripheral proteins of the oxygen-evolving complex and a large number of cofactors. It forms dimeric complexes. Binds multiple chlorophylls. PSII binds additional chlorophylls, carotenoids and specific lipids. serves as cofactor.

Its subcellular location is the plastid. It is found in the chloroplast thylakoid membrane. Functionally, one of the components of the core complex of photosystem II (PSII). It binds chlorophyll and helps catalyze the primary light-induced photochemical processes of PSII. PSII is a light-driven water:plastoquinone oxidoreductase, using light energy to abstract electrons from H(2)O, generating O(2) and a proton gradient subsequently used for ATP formation. The sequence is that of Photosystem II CP47 reaction center protein from Nephroselmis olivacea (Green alga).